The chain runs to 295 residues: SPX domain-containing protein 1 (295 aa).

The SPX domain maps to 1–166 (MKFGKSLSSQ…GALIRLPFIQ (166 aa)). The tract at residues 197 to 227 (NELPVSSEDGRGDSTNEDKPSNPSSSLVNGG) is disordered. Over residues 204 to 216 (EDGRGDSTNEDKP) the composition is skewed to basic and acidic residues.

In terms of assembly, interacts (via SPX domain) with PHR2 (via C-terminus). Interacts with RLI1 in the nucleus to prevents its positive regulation of leaf inclination during phosphate (Pi) starvation.

The protein localises to the nucleus. Involved in plant adaptation to phosphate (Pi) starvation. Inhibits PHR2 DNA-binding activity via a Pi-dependent protein interaction. Suppresses the regulation on expression of PT2 by PHR2 and accumulation of shoot Pi. Optimizes growth under phosphate-limited conditions through a negative feedback loop of the PSI (phosphate starvation-induced) signaling pathway. Regulates the expression of SPX2, SPX3 and SPX5. May be an important link between signal transduction pathways related to phosphate starvation and cold stress. Together with SPX2, plays a negative role in the regulation of leaf inclination by preventing RLI1 transcription factor activity in Pi depleted conditions. The polypeptide is SPX domain-containing protein 1 (Oryza sativa subsp. indica (Rice)).